The sequence spans 187 residues: Adenylate kinase (187 aa).

Position 12–17 (G12–T17) interacts with ATP. Positions S32 to V61 are NMP. Residues T33, R38, D59 to V61, G87 to R90, and Q94 each bind AMP. An LID region spans residues G128 to D134. R129 lines the ATP pocket. AMP-binding residues include R131 and R142. R170 contacts ATP.

The protein belongs to the adenylate kinase family. Monomer.

Its subcellular location is the cytoplasm. The catalysed reaction is AMP + ATP = 2 ADP. The protein operates within purine metabolism; AMP biosynthesis via salvage pathway; AMP from ADP: step 1/1. Functionally, catalyzes the reversible transfer of the terminal phosphate group between ATP and AMP. Plays an important role in cellular energy homeostasis and in adenine nucleotide metabolism. The polypeptide is Adenylate kinase (Leuconostoc mesenteroides subsp. mesenteroides (strain ATCC 8293 / DSM 20343 / BCRC 11652 / CCM 1803 / JCM 6124 / NCDO 523 / NBRC 100496 / NCIMB 8023 / NCTC 12954 / NRRL B-1118 / 37Y)).